Reading from the N-terminus, the 159-residue chain is Nucleoside diphosphate kinase (159 aa).

ATP is bound by residues Lys-13, Phe-61, Arg-89, Thr-95, Arg-106, and Asn-116. The active-site Pros-phosphohistidine intermediate is His-119.

It belongs to the NDK family. It depends on Mg(2+) as a cofactor.

It localises to the cytoplasm. The enzyme catalyses a 2'-deoxyribonucleoside 5'-diphosphate + ATP = a 2'-deoxyribonucleoside 5'-triphosphate + ADP. It carries out the reaction a ribonucleoside 5'-diphosphate + ATP = a ribonucleoside 5'-triphosphate + ADP. Major role in the synthesis of nucleoside triphosphates other than ATP. The ATP gamma phosphate is transferred to the NDP beta phosphate via a ping-pong mechanism, using a phosphorylated active-site intermediate. This is Nucleoside diphosphate kinase from Halorubrum lacusprofundi (strain ATCC 49239 / DSM 5036 / JCM 8891 / ACAM 34).